The sequence spans 352 residues: Uroporphyrinogen decarboxylase (352 aa).

Substrate is bound by residues 27-31, Asp77, Tyr154, Thr209, and His325; that span reads RQAGR.

The protein belongs to the uroporphyrinogen decarboxylase family. Homodimer.

It is found in the cytoplasm. The catalysed reaction is uroporphyrinogen III + 4 H(+) = coproporphyrinogen III + 4 CO2. It functions in the pathway porphyrin-containing compound metabolism; protoporphyrin-IX biosynthesis; coproporphyrinogen-III from 5-aminolevulinate: step 4/4. In terms of biological role, catalyzes the decarboxylation of four acetate groups of uroporphyrinogen-III to yield coproporphyrinogen-III. The chain is Uroporphyrinogen decarboxylase from Legionella pneumophila (strain Lens).